A 510-amino-acid chain; its full sequence is Inositol-3-phosphate synthase (510 aa).

NAD(+) contacts are provided by G70, G71, N72, N73, D143, I180, Q190, R193, T230, A231, N232, T233, G281, S282, D306, S309, N340, N341, D342, K355, G393, D394, D422, and S423.

It belongs to the myo-inositol 1-phosphate synthase family. Requires NAD(+) as cofactor.

Its subcellular location is the cytoplasm. It is found in the cytosol. The protein localises to the nucleus. The catalysed reaction is D-glucose 6-phosphate = 1D-myo-inositol 3-phosphate. It functions in the pathway polyol metabolism; myo-inositol biosynthesis; myo-inositol from D-glucose 6-phosphate: step 1/2. In terms of biological role, key enzyme in myo-inositol biosynthesis pathway that catalyzes the conversion of glucose 6-phosphate to 1-myo-inositol 1-phosphate in a NAD-dependent manner. In Sesamum indicum (Oriental sesame), this protein is Inositol-3-phosphate synthase.